Consider the following 237-residue polypeptide: LexA repressor (237 aa).

The segment at residues 26–46 (FDEMKEALDLRSKSGIHRLIT) is a DNA-binding region (H-T-H motif). Active-site for autocatalytic cleavage activity residues include Ser-158 and Lys-196.

This sequence belongs to the peptidase S24 family. Homodimer.

The catalysed reaction is Hydrolysis of Ala-|-Gly bond in repressor LexA.. Represses a number of genes involved in the response to DNA damage (SOS response), including recA and lexA. In the presence of single-stranded DNA, RecA interacts with LexA causing an autocatalytic cleavage which disrupts the DNA-binding part of LexA, leading to derepression of the SOS regulon and eventually DNA repair. The chain is LexA repressor from Xanthobacter autotrophicus (strain ATCC BAA-1158 / Py2).